Consider the following 76-residue polypeptide: DNA-directed RNA polymerase subunit epsilon (76 aa).

Belongs to the RNA polymerase subunit epsilon family. In terms of assembly, RNAP is composed of a core of 2 alpha, a beta and a beta' subunit. The core is associated with a delta subunit, and at least one of epsilon or omega. When a sigma factor is associated with the core the holoenzyme is formed, which can initiate transcription.

The enzyme catalyses RNA(n) + a ribonucleoside 5'-triphosphate = RNA(n+1) + diphosphate. Functionally, a non-essential component of RNA polymerase (RNAP). This chain is DNA-directed RNA polymerase subunit epsilon, found in Streptococcus pyogenes serotype M1.